A 209-amino-acid chain; its full sequence is Redox-sensing transcriptional repressor Rex (209 aa).

Positions 16-55 form a DNA-binding region, H-T-H motif; sequence LYYRFIQNLSLSGKQRVSSAELSEAVKVDSATIRRDFSYF. 90–95 is an NAD(+) binding site; it reads GVGNLG.

The protein belongs to the transcriptional regulatory Rex family. As to quaternary structure, homodimer.

The protein localises to the cytoplasm. In terms of biological role, modulates transcription in response to changes in cellular NADH/NAD(+) redox state. The chain is Redox-sensing transcriptional repressor Rex from Bacillus cytotoxicus (strain DSM 22905 / CIP 110041 / 391-98 / NVH 391-98).